The sequence spans 428 residues: UPF0229 protein YeaH (428 aa).

Over residues 78–90 (GNDHFIQNDRIER) the composition is skewed to basic and acidic residues. The disordered stretch occupies residues 78–111 (GNDHFIQNDRIERPQGGGGGGSGSGQGQASQDGE). Residues 92–103 (QGGGGGGSGSGQ) show a composition bias toward gly residues.

Belongs to the UPF0229 family.

The protein is UPF0229 protein YeaH of Salmonella heidelberg (strain SL476).